A 440-amino-acid polypeptide reads, in one-letter code: Ribosomal protein uS12 methylthiotransferase RimO (440 aa).

One can recognise an MTTase N-terminal domain in the interval 5–115; sequence PTVGFVSLGC…VVNAVHEVVP (111 aa). The [4Fe-4S] cluster site is built by Cys-14, Cys-50, Cys-79, Cys-148, Cys-152, and Cys-155. The 239-residue stretch at 134–372 folds into the Radical SAM core domain; that stretch reads LTPRHYAYLK…MAHQQAISAA (239 aa). The TRAM domain occupies 375–440; it reads QLKVGKELDV…DEYDLWAEVI (66 aa).

This sequence belongs to the methylthiotransferase family. RimO subfamily. Requires [4Fe-4S] cluster as cofactor.

The protein localises to the cytoplasm. It carries out the reaction L-aspartate(89)-[ribosomal protein uS12]-hydrogen + (sulfur carrier)-SH + AH2 + 2 S-adenosyl-L-methionine = 3-methylsulfanyl-L-aspartate(89)-[ribosomal protein uS12]-hydrogen + (sulfur carrier)-H + 5'-deoxyadenosine + L-methionine + A + S-adenosyl-L-homocysteine + 2 H(+). Functionally, catalyzes the methylthiolation of an aspartic acid residue of ribosomal protein uS12. The chain is Ribosomal protein uS12 methylthiotransferase RimO from Stutzerimonas stutzeri (strain A1501) (Pseudomonas stutzeri).